A 149-amino-acid chain; its full sequence is Protein SprT-like (149 aa).

Residues 4-144 (TDYVKQVSLE…GLCRGKLLLV (141 aa)) enclose the SprT-like domain. A Zn(2+)-binding site is contributed by histidine 64. Residue glutamate 65 is part of the active site. Histidine 68 is a binding site for Zn(2+).

It belongs to the SprT family. The cofactor is Zn(2+).

The protein localises to the cytoplasm. The polypeptide is Protein SprT-like (Streptococcus pneumoniae serotype 4 (strain ATCC BAA-334 / TIGR4)).